Consider the following 264-residue polypeptide: Thymidylate synthase (264 aa).

Arg-21 serves as a coordination point for dUMP. His-51 provides a ligand contact to (6R)-5,10-methylene-5,6,7,8-tetrahydrofolate. 126–127 (RR) contributes to the dUMP binding site. Cys-146 acts as the Nucleophile in catalysis. DUMP is bound by residues 166-169 (RSCD), Asn-177, and 207-209 (HLY). Asp-169 is a (6R)-5,10-methylene-5,6,7,8-tetrahydrofolate binding site. Position 263 (Ala-263) interacts with (6R)-5,10-methylene-5,6,7,8-tetrahydrofolate.

The protein belongs to the thymidylate synthase family. Bacterial-type ThyA subfamily. Homodimer.

It localises to the cytoplasm. It catalyses the reaction dUMP + (6R)-5,10-methylene-5,6,7,8-tetrahydrofolate = 7,8-dihydrofolate + dTMP. It participates in pyrimidine metabolism; dTTP biosynthesis. Catalyzes the reductive methylation of 2'-deoxyuridine-5'-monophosphate (dUMP) to 2'-deoxythymidine-5'-monophosphate (dTMP) while utilizing 5,10-methylenetetrahydrofolate (mTHF) as the methyl donor and reductant in the reaction, yielding dihydrofolate (DHF) as a by-product. This enzymatic reaction provides an intracellular de novo source of dTMP, an essential precursor for DNA biosynthesis. The sequence is that of Thymidylate synthase from Salmonella paratyphi C (strain RKS4594).